The primary structure comprises 465 residues: Glutamate--tRNA ligase (465 aa).

The 'HIGH' region motif lies at 11–21; sequence PSPTGYLHIGG. The 'KMSKS' region signature appears at 243-247; the sequence is KLSKR. An ATP-binding site is contributed by lysine 246.

The protein belongs to the class-I aminoacyl-tRNA synthetase family. Glutamate--tRNA ligase type 1 subfamily. In terms of assembly, monomer.

The protein localises to the cytoplasm. The enzyme catalyses tRNA(Glu) + L-glutamate + ATP = L-glutamyl-tRNA(Glu) + AMP + diphosphate. Functionally, catalyzes the attachment of glutamate to tRNA(Glu) in a two-step reaction: glutamate is first activated by ATP to form Glu-AMP and then transferred to the acceptor end of tRNA(Glu). The sequence is that of Glutamate--tRNA ligase from Aromatoleum aromaticum (strain DSM 19018 / LMG 30748 / EbN1) (Azoarcus sp. (strain EbN1)).